A 418-amino-acid polypeptide reads, in one-letter code: Voltage-gated ClC-type chloride channel ClcB (418 aa).

A run of 10 helical transmembrane segments spans residues 5 to 25 (LLIATVVGILAAFAVAGFRHA), 54 to 74 (LLTPALGGLAAGLLLMGWQKF), 146 to 166 (LWIACGAAAGMAAAYRAPLAG), 168 to 188 (LFIAEVLFGTMMLASLGPVII), 222 to 242 (ALIISTGVLAGLCGPLLLTLM), 258 to 278 (WQLALGGVIVGLLSLFTPAVW), 291 to 311 (APPLLMIIAGIFLCKLCAVLA), 316 to 336 (GAPGGVFTPTLFIGLAIGMLY), 352 to 372 (LLLGLTEMATLLAATTHAPIM), and 380 to 400 (MTGEYQLLPGLLIACVIASVI).

The protein belongs to the chloride channel (TC 2.A.49) family. ClcB subfamily.

Its subcellular location is the cell inner membrane. Probably acts as an electrical shunt for an outwardly-directed proton pump that is linked to amino acid decarboxylation, as part of the extreme acid resistance (XAR) response. The protein is Voltage-gated ClC-type chloride channel ClcB of Shigella boydii serotype 18 (strain CDC 3083-94 / BS512).